The primary structure comprises 371 residues: MSTNNSDIRVVVGMSGGVDSSVTAHILKEQGYDVIGIFMKNWDDTDEFGVCTATEDYDDVIRVANQIGIPYYAVNFEKEYWDKVFTYFLDEYKLGRTPNPDVMCNKEIKFKAFLEHAESLGADFVATGHYAQVKKVGDEIELLRGVDNNKDQTYFLNQLSQDQLKKVMFPLGAMEKTEVREIAKKAGLATANKKDSTGICFIGERNFKQFLSEYLPAQPGEMRTLNGEVLGKHDGLMYYTIGQRHGLGIGGDGEPWFVVGKDLKENVLFVEQGFHHETLYSDSLIATDISFTTNAAKPKTIECTAKFRYRQTDTKVTVHLREDGTAEVVFADPVRAITPGQAVVFYDGDICLGGGTIDTVWKNGAKLNYVG.

ATP contacts are provided by residues 13 to 20 and Met39; that span reads GMSGGVDS. Residues 99–101 are interaction with target base in tRNA; that stretch reads NPD. Catalysis depends on Cys104, which acts as the Nucleophile. A disulfide bridge connects residues Cys104 and Cys200. Residue Gly128 participates in ATP binding. The interval 150–152 is interaction with tRNA; sequence KDQ. Cys200 functions as the Cysteine persulfide intermediate in the catalytic mechanism. An interaction with tRNA region spans residues 308–309; that stretch reads RY.

This sequence belongs to the MnmA/TRMU family.

It is found in the cytoplasm. It carries out the reaction S-sulfanyl-L-cysteinyl-[protein] + uridine(34) in tRNA + AH2 + ATP = 2-thiouridine(34) in tRNA + L-cysteinyl-[protein] + A + AMP + diphosphate + H(+). Functionally, catalyzes the 2-thiolation of uridine at the wobble position (U34) of tRNA, leading to the formation of s(2)U34. The protein is tRNA-specific 2-thiouridylase MnmA of Listeria monocytogenes serotype 4a (strain HCC23).